The following is a 204-amino-acid chain: Proteasome subunit beta type-3-B (204 aa).

The protein belongs to the peptidase T1B family. Component of the 20S core complex of the 26S proteasome. The 26S proteasome is composed of a core protease (CP), known as the 20S proteasome, capped at one or both ends by the 19S regulatory particle (RP/PA700). The 20S proteasome core is composed of 28 subunits that are arranged in four stacked rings, resulting in a barrel-shaped structure. The two end rings are each formed by seven alpha subunits, and the two central rings are each formed by seven beta subunits. The catalytic chamber with the active sites is on the inside of the barrel.

It is found in the cytoplasm. It localises to the nucleus. Functionally, non-catalytic component of the proteasome, a multicatalytic proteinase complex which is characterized by its ability to cleave peptides with Arg, Phe, Tyr, Leu, and Glu adjacent to the leaving group at neutral or slightly basic pH. The proteasome has an ATP-dependent proteolytic activity. The polypeptide is Proteasome subunit beta type-3-B (PBC2) (Arabidopsis thaliana (Mouse-ear cress)).